We begin with the raw amino-acid sequence, 147 residues long: Lysozyme C-1 (147 aa).

The first 18 residues, 1–18, serve as a signal peptide directing secretion; it reads MKALIILGLLCLSVAVQG. One can recognise a C-type lysozyme domain in the interval 19–147; sequence KVFERCELAR…VSSYVEGCSL (129 aa). 4 disulfide bridges follow: Cys-24–Cys-145, Cys-48–Cys-133, Cys-83–Cys-99, and Cys-95–Cys-113. Catalysis depends on residues Glu-53 and Asp-71.

This sequence belongs to the glycosyl hydrolase 22 family. In terms of assembly, monomer. Expressed in stomach.

Its subcellular location is the secreted. The enzyme catalyses Hydrolysis of (1-&gt;4)-beta-linkages between N-acetylmuramic acid and N-acetyl-D-glucosamine residues in a peptidoglycan and between N-acetyl-D-glucosamine residues in chitodextrins.. Lysozymes have primarily a bacteriolytic function; those in tissues and body fluids are associated with the monocyte-macrophage system and enhance the activity of immunoagents. This Ovis aries (Sheep) protein is Lysozyme C-1.